Reading from the N-terminus, the 190-residue chain is Potassium-transporting ATPase KdpC subunit (190 aa).

A helical transmembrane segment spans residues 10–30 (TFLFLLLITGGVYPLLTTALG).

It belongs to the KdpC family. The system is composed of three essential subunits: KdpA, KdpB and KdpC.

It is found in the cell inner membrane. In terms of biological role, part of the high-affinity ATP-driven potassium transport (or Kdp) system, which catalyzes the hydrolysis of ATP coupled with the electrogenic transport of potassium into the cytoplasm. This subunit acts as a catalytic chaperone that increases the ATP-binding affinity of the ATP-hydrolyzing subunit KdpB by the formation of a transient KdpB/KdpC/ATP ternary complex. The polypeptide is Potassium-transporting ATPase KdpC subunit (Escherichia coli (strain SMS-3-5 / SECEC)).